The following is a 368-amino-acid chain: 3-dehydroquinate synthase (368 aa).

NAD(+) is bound by residues 99-103 (GVVGD), 123-124 (TT), Lys-136, and Lys-145. The Zn(2+) site is built by Glu-178, His-242, and His-259.

It belongs to the sugar phosphate cyclases superfamily. Dehydroquinate synthase family. The cofactor is NAD(+). It depends on Co(2+) as a cofactor. Zn(2+) is required as a cofactor.

It is found in the cytoplasm. The catalysed reaction is 7-phospho-2-dehydro-3-deoxy-D-arabino-heptonate = 3-dehydroquinate + phosphate. Its pathway is metabolic intermediate biosynthesis; chorismate biosynthesis; chorismate from D-erythrose 4-phosphate and phosphoenolpyruvate: step 2/7. Its function is as follows. Catalyzes the conversion of 3-deoxy-D-arabino-heptulosonate 7-phosphate (DAHP) to dehydroquinate (DHQ). This chain is 3-dehydroquinate synthase, found in Chlorobaculum tepidum (strain ATCC 49652 / DSM 12025 / NBRC 103806 / TLS) (Chlorobium tepidum).